A 355-amino-acid polypeptide reads, in one-letter code: Cyclic nucleotide-gated potassium channel mll3241 (355 aa).

The Cytoplasmic segment spans residues 1–12; sequence MSVLPFLRIYAP. A helical membrane pass occupies residues 13-30; it reads LNAVLAAPGLLAVAALTI. Residues 31–38 are Periplasmic-facing; sequence PDMSGRSR. The chain crosses the membrane as a helical span at residues 39-61; that stretch reads LALAALLAVIWGAYLLQLAATLL. Topologically, residues 62–74 are cytoplasmic; that stretch reads KRRAGVVRDRTPK. The helical transmembrane segment at 75–94 threads the bilayer; that stretch reads IAIDVLAVLVPLAAFLLDGS. A helical transmembrane segment spans residues 95 to 112; the sequence is PDWSLYCAVWLLKPLRDS. Over 113 to 129 the chain is Cytoplasmic; the sequence is TFFPVLGRVLANEARNL. A helical transmembrane segment spans residues 130-150; sequence IGVTTLFGVVLFAVALAAYVI. Topologically, residues 151 to 161 are periplasmic; that stretch reads ERDIQPEKFGS. Positions 162–180 form an intramembrane region, pore-forming; it reads IPQAMWWAVVTLSTTGYGD. Positions 175–180 match the Selectivity filter motif; it reads TTGYGD. Topologically, residues 181–185 are periplasmic; that stretch reads TIPQS. Residues 186–210 form a helical membrane-spanning segment; the sequence is FAGRVLAGAVMMSGIGIFGLWAGIL. Residues 211-355 lie on the Cytoplasmic side of the membrane; that stretch reads ATGFYQEVRR…LERRGAAASA (145 aa). 3',5'-cyclic AMP-binding positions include 297–298, 307–308, and arginine 348; these read GE and RS.

Belongs to the potassium channel family. Homotetramer.

The protein localises to the cell membrane. Functionally, cyclic nucleotide-regulated potassium channel activated by cAMP. This is Cyclic nucleotide-gated potassium channel mll3241 from Mesorhizobium japonicum (strain LMG 29417 / CECT 9101 / MAFF 303099) (Mesorhizobium loti (strain MAFF 303099)).